The sequence spans 143 residues: Transcriptional regulator MraZ (143 aa).

SpoVT-AbrB domains follow at residues 5 to 47 (EYQH…PLTE) and 76 to 119 (AMEG…AKER).

The protein belongs to the MraZ family. As to quaternary structure, forms oligomers.

It localises to the cytoplasm. Its subcellular location is the nucleoid. In Lactobacillus delbrueckii subsp. bulgaricus (strain ATCC 11842 / DSM 20081 / BCRC 10696 / JCM 1002 / NBRC 13953 / NCIMB 11778 / NCTC 12712 / WDCM 00102 / Lb 14), this protein is Transcriptional regulator MraZ.